We begin with the raw amino-acid sequence, 197 residues long: NADH-quinone oxidoreductase subunit C (197 aa).

This sequence belongs to the complex I 30 kDa subunit family. NDH-1 is composed of 14 different subunits. Subunits NuoB, C, D, E, F, and G constitute the peripheral sector of the complex.

The protein resides in the cell inner membrane. It carries out the reaction a quinone + NADH + 5 H(+)(in) = a quinol + NAD(+) + 4 H(+)(out). Its function is as follows. NDH-1 shuttles electrons from NADH, via FMN and iron-sulfur (Fe-S) centers, to quinones in the respiratory chain. The immediate electron acceptor for the enzyme in this species is believed to be ubiquinone. Couples the redox reaction to proton translocation (for every two electrons transferred, four hydrogen ions are translocated across the cytoplasmic membrane), and thus conserves the redox energy in a proton gradient. This is NADH-quinone oxidoreductase subunit C from Caulobacter vibrioides (strain ATCC 19089 / CIP 103742 / CB 15) (Caulobacter crescentus).